We begin with the raw amino-acid sequence, 957 residues long: Glycine dehydrogenase (decarboxylating) (957 aa).

Lysine 708 carries the post-translational modification N6-(pyridoxal phosphate)lysine.

The protein belongs to the GcvP family. As to quaternary structure, the glycine cleavage system is composed of four proteins: P, T, L and H. Pyridoxal 5'-phosphate serves as cofactor.

It carries out the reaction N(6)-[(R)-lipoyl]-L-lysyl-[glycine-cleavage complex H protein] + glycine + H(+) = N(6)-[(R)-S(8)-aminomethyldihydrolipoyl]-L-lysyl-[glycine-cleavage complex H protein] + CO2. Its function is as follows. The glycine cleavage system catalyzes the degradation of glycine. The P protein binds the alpha-amino group of glycine through its pyridoxal phosphate cofactor; CO(2) is released and the remaining methylamine moiety is then transferred to the lipoamide cofactor of the H protein. This Escherichia coli O157:H7 protein is Glycine dehydrogenase (decarboxylating).